Reading from the N-terminus, the 548-residue chain is Chaperonin GroEL 1 (548 aa).

ATP-binding positions include 30–33, K51, 87–91, G415, 479–481, and D495; these read TLGP, DGTTT, and NAA.

It belongs to the chaperonin (HSP60) family. In terms of assembly, forms a cylinder of 14 subunits composed of two heptameric rings stacked back-to-back. Interacts with the co-chaperonin GroES.

It is found in the cytoplasm. The catalysed reaction is ATP + H2O + a folded polypeptide = ADP + phosphate + an unfolded polypeptide.. Functionally, together with its co-chaperonin GroES, plays an essential role in assisting protein folding. The GroEL-GroES system forms a nano-cage that allows encapsulation of the non-native substrate proteins and provides a physical environment optimized to promote and accelerate protein folding. The polypeptide is Chaperonin GroEL 1 (Escherichia coli O1:K1 / APEC).